The primary structure comprises 60 residues: Metallothionein (60 aa).

The beta stretch occupies residues 1–28 (MDPCDCSKTGKCNCGGSCTCTNCSCTSC). The a divalent metal cation site is built by Cys-4, Cys-6, Cys-12, Cys-14, Cys-18, Cys-20, Cys-23, Cys-25, Cys-28, Cys-32, Cys-33, Cys-35, Cys-36, Cys-40, Cys-43, Cys-47, Cys-49, Cys-54, Cys-58, and Cys-59. Residues 29–60 (KKSCCACCPSGCTKCASGCVCKGKTCDTTCCQ) are alpha.

It belongs to the metallothionein superfamily. Type 1 family.

Metallothioneins have a high content of cysteine residues that bind various heavy metals. In Oryzias latipes (Japanese rice fish), this protein is Metallothionein (mt).